The primary structure comprises 168 residues: MINDILAPGLRVVFCGINPGKSSAHTGFHFAHPGNRFWKVIHQAGFTDKLLKPEEEQHLLDTRCGITMLVERPTVQANEVNLHELRSGGRELVKKIEDYQPAALAILGKQAYEQAFSQRGAQWGKQRITIGMTQVWVLPNPSGLNRATLDKLVEAYRELDEALVVRGR.

This sequence belongs to the uracil-DNA glycosylase (UDG) superfamily. TDG/mug family. In terms of assembly, binds DNA as a monomer.

It is found in the cytoplasm. It carries out the reaction Specifically hydrolyzes mismatched double-stranded DNA and polynucleotides, releasing free uracil.. Its function is as follows. Excises ethenocytosine and uracil, which can arise by alkylation or deamination of cytosine, respectively, from the corresponding mispairs with guanine in ds-DNA. It is capable of hydrolyzing the carbon-nitrogen bond between the sugar-phosphate backbone of the DNA and the mispaired base. The complementary strand guanine functions in substrate recognition. Required for DNA damage lesion repair in stationary-phase cells. The protein is G/U mismatch-specific DNA glycosylase of Enterobacter sp. (strain 638).